The primary structure comprises 110 residues: Putative anti-sigma factor antagonist TM_1442 (110 aa).

One can recognise an STAS domain in the interval 4-110; that stretch reads LKLDIVEQDD…FKITDTVEEA (107 aa). The residue at position 59 (Ser59) is a Phosphoserine.

This sequence belongs to the anti-sigma-factor antagonist family. Phosphorylated on a serine residue.

In the phosphorylated form it could act as an anti-anti-sigma factor that counteracts an anti-sigma factor and thus releases a sigma factor from inhibition. The polypeptide is Putative anti-sigma factor antagonist TM_1442 (Thermotoga maritima (strain ATCC 43589 / DSM 3109 / JCM 10099 / NBRC 100826 / MSB8)).